Here is a 512-residue protein sequence, read N- to C-terminus: 2,3-bisphosphoglycerate-independent phosphoglycerate mutase (512 aa).

Residues aspartate 14 and serine 64 each contribute to the Mn(2+) site. Serine 64 (phosphoserine intermediate) is an active-site residue. Residues histidine 125, 155–156 (RD), arginine 187, arginine 193, 259–262 (RADR), and lysine 332 contribute to the substrate site. Positions 399, 403, 440, 441, and 459 each coordinate Mn(2+).

Belongs to the BPG-independent phosphoglycerate mutase family. As to quaternary structure, monomer. Mn(2+) is required as a cofactor.

The enzyme catalyses (2R)-2-phosphoglycerate = (2R)-3-phosphoglycerate. Its pathway is carbohydrate degradation; glycolysis; pyruvate from D-glyceraldehyde 3-phosphate: step 3/5. Catalyzes the interconversion of 2-phosphoglycerate and 3-phosphoglycerate. The polypeptide is 2,3-bisphosphoglycerate-independent phosphoglycerate mutase (Ruthia magnifica subsp. Calyptogena magnifica).